The sequence spans 256 residues: Indole-3-glycerol phosphate synthase (256 aa).

This sequence belongs to the TrpC family.

The catalysed reaction is 1-(2-carboxyphenylamino)-1-deoxy-D-ribulose 5-phosphate + H(+) = (1S,2R)-1-C-(indol-3-yl)glycerol 3-phosphate + CO2 + H2O. The protein operates within amino-acid biosynthesis; L-tryptophan biosynthesis; L-tryptophan from chorismate: step 4/5. This is Indole-3-glycerol phosphate synthase from Chlorobaculum tepidum (strain ATCC 49652 / DSM 12025 / NBRC 103806 / TLS) (Chlorobium tepidum).